A 556-amino-acid chain; its full sequence is Formate--tetrahydrofolate ligase (556 aa).

65–72 (TPAGEGKS) contacts ATP.

This sequence belongs to the formate--tetrahydrofolate ligase family.

The catalysed reaction is (6S)-5,6,7,8-tetrahydrofolate + formate + ATP = (6R)-10-formyltetrahydrofolate + ADP + phosphate. Its pathway is one-carbon metabolism; tetrahydrofolate interconversion. The sequence is that of Formate--tetrahydrofolate ligase from Streptococcus pneumoniae (strain Hungary19A-6).